The chain runs to 434 residues: Methylenetetrahydrofolate--tRNA-(uracil-5-)-methyltransferase TrmFO (434 aa).

10–15 (GAGLAG) lines the FAD pocket.

This sequence belongs to the MnmG family. TrmFO subfamily. Requires FAD as cofactor.

It is found in the cytoplasm. It catalyses the reaction uridine(54) in tRNA + (6R)-5,10-methylene-5,6,7,8-tetrahydrofolate + NADH + H(+) = 5-methyluridine(54) in tRNA + (6S)-5,6,7,8-tetrahydrofolate + NAD(+). The catalysed reaction is uridine(54) in tRNA + (6R)-5,10-methylene-5,6,7,8-tetrahydrofolate + NADPH + H(+) = 5-methyluridine(54) in tRNA + (6S)-5,6,7,8-tetrahydrofolate + NADP(+). Functionally, catalyzes the folate-dependent formation of 5-methyl-uridine at position 54 (M-5-U54) in all tRNAs. This chain is Methylenetetrahydrofolate--tRNA-(uracil-5-)-methyltransferase TrmFO, found in Bacillus cereus (strain ATCC 10987 / NRS 248).